Reading from the N-terminus, the 433-residue chain is 28S rRNA (cytosine-C(5))-methyltransferase (433 aa).

Residues 235-241, E259, D286, and D304 contribute to the S-adenosyl-L-methionine site; that span reads CAAPGMK. The Nucleophile role is filled by C357.

The protein belongs to the class I-like SAM-binding methyltransferase superfamily. RsmB/NOP family.

It carries out the reaction a cytidine in 28S rRNA + S-adenosyl-L-methionine = a 5-methylcytidine in 28S rRNA + S-adenosyl-L-homocysteine + H(+). Its function is as follows. S-adenosyl-L-methionine-dependent methyltransferase that specifically methylates the C(5) position of a cytosine in 28S rRNA. The sequence is that of 28S rRNA (cytosine-C(5))-methyltransferase from Drosophila melanogaster (Fruit fly).